The chain runs to 112 residues: ATP synthase epsilon chain (112 aa).

This sequence belongs to the ATPase epsilon chain family. As to quaternary structure, F-type ATPases have 2 components, CF(1) - the catalytic core - and CF(0) - the membrane proton channel. CF(1) has five subunits: alpha(3), beta(3), gamma(1), delta(1), epsilon(1). CF(0) has three main subunits: a, b and c.

Its subcellular location is the cell inner membrane. Its function is as follows. Produces ATP from ADP in the presence of a proton gradient across the membrane. This chain is ATP synthase epsilon chain (atpC), found in Rickettsia prowazekii (strain Madrid E).